The chain runs to 95 residues: UPF0213 protein ESA_03545 (95 aa).

In terms of domain architecture, GIY-YIG spans 2 to 77; it reads EEWFLYLIRC…KQLTKRQKEQ (76 aa).

It belongs to the UPF0213 family.

The polypeptide is UPF0213 protein ESA_03545 (Cronobacter sakazakii (strain ATCC BAA-894) (Enterobacter sakazakii)).